We begin with the raw amino-acid sequence, 554 residues long: MALSIMSSYASFRPFKPSSSLSSSQNIIRNFDENSKYHIRSNGDLTPQKDLDKYRDVLRKADPFDEGLKMIDAIQRLGIDYIFEEEIDKIIQSQSAYKFFREFEHDHHHHQDLYDVALRFRLLRQHGHFVPADIFNKYKDNNKGCFDTRLREDIKGLLSLYEASHLCIEGENILDEAALFSAQHLEASMTRLHRYDQYQAKYVATTLQNPTHKSLSKFTAKDLFGVYPSENGYINLFQQLAKVEFNRVQSLHRMEIDKVTRWWRDIGLAKELTFARDQPVKWYIWSMACLTDPILSKQRVALTKSISFIYVIDDIFDMYSSLDELILFTQAVSSWEYSAIEKLPDSMKTCFKALDNMINESSHTIYQKRGWSPLHSLRKTWASLCEAFLVEAKWFASRHVPKAKEYLENGVVSSGVHVVLVHIFVLLDETSLTQKTLDFVENMPSIITSTASILRLWDDFGSAKDENQEGHDGSYVECYMKELGGSVEDAREEMMEKISDAWKCLNKECILRNPAFPPPFLKASLNLARLVPLMYNYDHNQRLPHLEEHIKSLL.

Arg-276, Asp-313, Asp-317, Arg-455, and Asp-458 together coordinate (2E,6E)-farnesyl diphosphate. Mg(2+) is bound by residues Asp-313 and Asp-317. The short motif at 313 to 317 (DDIFD) is the DDXXD motif element. Residues Asp-458, Ser-462, and Glu-466 each contribute to the Mg(2+) site.

It belongs to the terpene synthase family. Tpsb subfamily. Mg(2+) is required as a cofactor. The cofactor is Mn(2+). Highly expressed in glandular trichomes.

The catalysed reaction is (2E,6E)-farnesyl diphosphate + H2O = (6E)-nerolidol + diphosphate. It carries out the reaction (2E)-geranyl diphosphate + H2O = (R)-linalool + diphosphate. The enzyme catalyses (2E)-geranyl diphosphate + H2O = (S)-linalool + diphosphate. The protein operates within secondary metabolite biosynthesis; terpenoid biosynthesis. Its function is as follows. Involved in sesquiterpene olefins biosynthesis, constituants of cannabinoids and terpenoids-rich resins. Catalyzes primarily the conversion of (2E)-farnesyl diphosphate to (E)-nerolidol, and the conversion of (2E)-geranyl diphosphate to (+)linalool and (-)linalool. The sequence is that of (E)-nerolidol synthase TPS18VF from Cannabis sativa (Hemp).